The primary structure comprises 706 residues: Translation initiation factor IF-2 (706 aa).

Residues 55–81 (AKETANEKPAEQKKQSSNKINDRKKND) are compositionally biased toward basic and acidic residues. The interval 55–127 (AKETANEKPA…KPKKELPEKI (73 aa)) is disordered. A compositionally biased stretch (low complexity) spans 82-98 (VQNNQFNKNKKNNNQNK). In terms of domain architecture, tr-type G spans 207-376 (VRPPVVTIMG…LLVSEVGELK (170 aa)). The G1 stretch occupies residues 216-223 (GHVDHGKT). A GTP-binding site is contributed by 216–223 (GHVDHGKT). The tract at residues 241-245 (GITQH) is G2. The interval 262–265 (DTPG) is G3. GTP contacts are provided by residues 262–266 (DTPGH) and 316–319 (NKID). The tract at residues 316-319 (NKID) is G4. The G5 stretch occupies residues 352–354 (SAK).

Belongs to the TRAFAC class translation factor GTPase superfamily. Classic translation factor GTPase family. IF-2 subfamily.

It localises to the cytoplasm. Its function is as follows. One of the essential components for the initiation of protein synthesis. Protects formylmethionyl-tRNA from spontaneous hydrolysis and promotes its binding to the 30S ribosomal subunits. Also involved in the hydrolysis of GTP during the formation of the 70S ribosomal complex. This chain is Translation initiation factor IF-2, found in Bacillus pumilus (strain SAFR-032).